A 981-amino-acid chain; its full sequence is Translation initiation factor IF-2 (981 aa).

The segment at 31 to 370 (FVKSASSTVE…SKRAKRAEYE (340 aa)) is disordered. The span at 64–87 (GAAAPAARPAAKPGAPSPSAAKPG) shows a compositional bias: low complexity. Pro residues predominate over residues 88–111 (GPRPGPKPAAPAPAAPAAPAPAAP). Positions 112 to 121 (AAPAAAAPAA) are enriched in low complexity. Residues 136–145 (PAQPARPAPA) show a composition bias toward pro residues. The span at 146–165 (APAASAPAAPAAPAAPSTGA) shows a compositional bias: low complexity. A compositionally biased stretch (pro residues) spans 256-269 (RPSPGSMPPRPNPG). Residues 270–279 (AMPARSARPA) show a composition bias toward low complexity. Residues 280 to 339 (PGGGGRPGRPGGAPGGRPGGGGGGYRGGGAPGAGAGAGAPGGAAPAGGFRGRPGGGGRPG) are compositionally biased toward gly residues. Positions 356 to 365 (RRGRKSKRAK) are enriched in basic residues. A tr-type G domain is found at 477 to 649 (SRPPVVTVMG…VLLTADASLD (173 aa)). The interval 486–493 (GHVDHGKT) is G1. 486 to 493 (GHVDHGKT) lines the GTP pocket. Residues 511–515 (GITQH) form a G2 region. Residues 536–539 (DTPG) are G3. Residues 536 to 540 (DTPGH) and 590 to 593 (NKID) each bind GTP. The segment at 590–593 (NKID) is G4. The G5 stretch occupies residues 626-628 (SAK).

This sequence belongs to the TRAFAC class translation factor GTPase superfamily. Classic translation factor GTPase family. IF-2 subfamily.

The protein resides in the cytoplasm. In terms of biological role, one of the essential components for the initiation of protein synthesis. Protects formylmethionyl-tRNA from spontaneous hydrolysis and promotes its binding to the 30S ribosomal subunits. Also involved in the hydrolysis of GTP during the formation of the 70S ribosomal complex. The chain is Translation initiation factor IF-2 from Rhodococcus erythropolis (strain PR4 / NBRC 100887).